The sequence spans 337 residues: Cell-surface associated glycoprotein DFI1 (337 aa).

The Cytoplasmic segment spans residues 1–21 (MEKLSINNNNNNRRYQSRRFD). A helical transmembrane segment spans residues 22-42 (GITIIRIVVLVFIVTVSTYFV). Over 43–269 (NSYTCNQPHH…NGGGLSHTNR (227 aa)) the chain is Extracellular. 4 N-linked (GlcNAc...) asparagine glycosylation sites follow: asparagine 53, asparagine 65, asparagine 87, and asparagine 100. 2 stretches are compositionally biased toward low complexity: residues 124 to 220 (SSTF…TSAS) and 241 to 259 (SVIS…KNND). Disordered regions lie at residues 124–224 (SSTF…QHVT) and 241–265 (SVIS…GGLS). A helical transmembrane segment spans residues 270–290 (IVVGVVVGVGGSILIGLLAVL). A Glycophorin A motif is present at residues 273–277 (GVVVG). Topologically, residues 291–337 (FYLRKRNNRDYEGGWTFWRKNEKLGSDEFFNGELGVRDRNINQGSNF) are cytoplasmic. The Calmodulin-binding motif lies at 301–314 (YEGGWTFWRKNEKL).

It belongs to the MID2 like cell wall stress sensor family. In terms of processing, cross-linked to the carbohydrate polymers of the cell wall. Post-translationally, O-glycosylated by MNT1 and MNT2. Also N-glycosylated.

The protein localises to the cell membrane. It is found in the cell septum. Its subcellular location is the secreted. The protein resides in the cell wall. Functionally, cell-surface associated glycoprotein that acts as a plasma membrane receptor-type protein which senses the presence of matrix. Binds to calmodulin in response to environmental conditions and initiates a signaling cascade that activates CEK1, thus promoting invasive filamentation. Involved in the maintenance of the cell wall. This is Cell-surface associated glycoprotein DFI1 from Candida albicans (strain SC5314 / ATCC MYA-2876) (Yeast).